Here is a 401-residue protein sequence, read N- to C-terminus: Imidazolonepropionase (401 aa).

Fe(3+) contacts are provided by histidine 66 and histidine 68. Zn(2+) contacts are provided by histidine 66 and histidine 68. 3 residues coordinate 4-imidazolone-5-propanoate: arginine 75, tyrosine 138, and histidine 171. Tyrosine 138 is a binding site for N-formimidoyl-L-glutamate. Residue histidine 236 coordinates Fe(3+). A Zn(2+)-binding site is contributed by histidine 236. Residue glutamine 239 coordinates 4-imidazolone-5-propanoate. Aspartate 311 contributes to the Fe(3+) binding site. Position 311 (aspartate 311) interacts with Zn(2+). N-formimidoyl-L-glutamate-binding residues include asparagine 313 and glycine 315. Threonine 316 contacts 4-imidazolone-5-propanoate.

Belongs to the metallo-dependent hydrolases superfamily. HutI family. Zn(2+) serves as cofactor. The cofactor is Fe(3+).

Its subcellular location is the cytoplasm. The catalysed reaction is 4-imidazolone-5-propanoate + H2O = N-formimidoyl-L-glutamate. It participates in amino-acid degradation; L-histidine degradation into L-glutamate; N-formimidoyl-L-glutamate from L-histidine: step 3/3. Functionally, catalyzes the hydrolytic cleavage of the carbon-nitrogen bond in imidazolone-5-propanoate to yield N-formimidoyl-L-glutamate. It is the third step in the universal histidine degradation pathway. The protein is Imidazolonepropionase of Pseudomonas putida (strain GB-1).